Here is a 360-residue protein sequence, read N- to C-terminus: Dual-specificity RNA methyltransferase RlmN (360 aa).

Catalysis depends on Glu89, which acts as the Proton acceptor. One can recognise a Radical SAM core domain in the interval 95–330; sequence DSGRGTLCVS…TRVTRGQDID (236 aa). Cys102 and Cys333 are joined by a disulfide. 3 residues coordinate [4Fe-4S] cluster: Cys109, Cys113, and Cys116. S-adenosyl-L-methionine is bound by residues 159 to 160, Ser191, 213 to 215, and Asn290; these read GE and SLH. The S-methylcysteine intermediate role is filled by Cys333.

Belongs to the radical SAM superfamily. RlmN family. [4Fe-4S] cluster serves as cofactor.

Its subcellular location is the cytoplasm. It carries out the reaction adenosine(2503) in 23S rRNA + 2 reduced [2Fe-2S]-[ferredoxin] + 2 S-adenosyl-L-methionine = 2-methyladenosine(2503) in 23S rRNA + 5'-deoxyadenosine + L-methionine + 2 oxidized [2Fe-2S]-[ferredoxin] + S-adenosyl-L-homocysteine. The enzyme catalyses adenosine(37) in tRNA + 2 reduced [2Fe-2S]-[ferredoxin] + 2 S-adenosyl-L-methionine = 2-methyladenosine(37) in tRNA + 5'-deoxyadenosine + L-methionine + 2 oxidized [2Fe-2S]-[ferredoxin] + S-adenosyl-L-homocysteine. Functionally, specifically methylates position 2 of adenine 2503 in 23S rRNA and position 2 of adenine 37 in tRNAs. m2A2503 modification seems to play a crucial role in the proofreading step occurring at the peptidyl transferase center and thus would serve to optimize ribosomal fidelity. The sequence is that of Dual-specificity RNA methyltransferase RlmN from Alkalilimnicola ehrlichii (strain ATCC BAA-1101 / DSM 17681 / MLHE-1).